A 103-amino-acid chain; its full sequence is Large ribosomal subunit protein bL21 (103 aa).

Belongs to the bacterial ribosomal protein bL21 family. As to quaternary structure, part of the 50S ribosomal subunit. Contacts protein L20.

This protein binds to 23S rRNA in the presence of protein L20. This is Large ribosomal subunit protein bL21 from Kineococcus radiotolerans (strain ATCC BAA-149 / DSM 14245 / SRS30216).